Consider the following 305-residue polypeptide: Tyrosine recombinase XerD (305 aa).

A Core-binding (CB) domain is found at 1–83; that stretch reads MEFISQFLEM…TIKSYYEFLI (83 aa). Residues 104 to 298 enclose the Tyr recombinase domain; it reads KLPEILSIDD…QTNHLKKALL (195 aa). Catalysis depends on residues arginine 145, lysine 175, histidine 250, arginine 253, and histidine 276. The active-site O-(3'-phospho-DNA)-tyrosine intermediate is tyrosine 285.

Belongs to the 'phage' integrase family. XerD subfamily. As to quaternary structure, forms a cyclic heterotetrameric complex composed of two molecules of XerC and two molecules of XerD.

It localises to the cytoplasm. Its function is as follows. Site-specific tyrosine recombinase, which acts by catalyzing the cutting and rejoining of the recombining DNA molecules. The XerC-XerD complex is essential to convert dimers of the bacterial chromosome into monomers to permit their segregation at cell division. It also contributes to the segregational stability of plasmids. This is Tyrosine recombinase XerD from Rickettsia bellii (strain RML369-C).